The chain runs to 122 residues: Large ribosomal subunit protein uL18 (122 aa).

Belongs to the universal ribosomal protein uL18 family. Part of the 50S ribosomal subunit; part of the 5S rRNA/L5/L18/L25 subcomplex. Contacts the 5S and 23S rRNAs.

Functionally, this is one of the proteins that bind and probably mediate the attachment of the 5S RNA into the large ribosomal subunit, where it forms part of the central protuberance. In Prochlorococcus marinus (strain MIT 9215), this protein is Large ribosomal subunit protein uL18.